A 381-amino-acid chain; its full sequence is Chymosin (381 aa).

A signal peptide spans 1-16 (MRCLVVLLAALALSQA). A propeptide spans 17–58 (SGITRIPLHKGKTLRKALKERGLLEDFLQRQQYAVSSKYSSL) (activation peptide). Positions 74-378 (YFGKIYIGTP…DRANNRVGLA (305 aa)) constitute a Peptidase A1 domain. Aspartate 92 is a catalytic residue. Cysteines 105 and 110 form a disulfide. Asparagine 158 is a glycosylation site (N-linked (GlcNAc...) asparagine). A disulfide bridge links cysteine 265 with cysteine 269. The active site involves aspartate 274. Cysteine 308 and cysteine 341 are disulfide-bonded. Asparagine 349 is a glycosylation site (N-linked (GlcNAc...) asparagine).

This sequence belongs to the peptidase A1 family.

The enzyme catalyses Broad specificity similar to that of pepsin A. Clots milk by cleavage of a single 104-Ser-Phe-|-Met-Ala-107 bond in kappa-chain of casein.. In terms of biological role, chymosin is synthesized in the mucosa of the abomasum (fourth stomach) of young (unweaned) ruminants. The enzyme hydrolyzes casein to paracasein. The protein is Chymosin of Camelus dromedarius (Dromedary).